Reading from the N-terminus, the 400-residue chain is Tryptophan synthase beta chain (400 aa).

Lysine 91 carries the N6-(pyridoxal phosphate)lysine modification.

It belongs to the TrpB family. As to quaternary structure, tetramer of two alpha and two beta chains. Pyridoxal 5'-phosphate is required as a cofactor.

It catalyses the reaction (1S,2R)-1-C-(indol-3-yl)glycerol 3-phosphate + L-serine = D-glyceraldehyde 3-phosphate + L-tryptophan + H2O. It functions in the pathway amino-acid biosynthesis; L-tryptophan biosynthesis; L-tryptophan from chorismate: step 5/5. In terms of biological role, the beta subunit is responsible for the synthesis of L-tryptophan from indole and L-serine. The chain is Tryptophan synthase beta chain from Listeria monocytogenes serotype 4b (strain CLIP80459).